Here is a 451-residue protein sequence, read N- to C-terminus: Gamma-aminobutyric acid receptor subunit alpha-2 (451 aa).

The first 28 residues, 1–28 (MKTKLNIYNMQLLLFVFLVWDPARLVLA), serve as a signal peptide directing secretion. The Extracellular portion of the chain corresponds to 29–249 (NIQEDEAKNN…MTAHFHLKRK (221 aa)). Asn38 is a glycosylation site (N-linked (GlcNAc...) asparagine). Arg94 lines the 4-aminobutanoate pocket. N-linked (GlcNAc...) asparagine glycosylation occurs at Asn138. Position 157 (Thr157) interacts with 4-aminobutanoate. Cys166 and Cys180 are disulfide-bonded. Residues 250–270 (IGYFVIQTYLPCIMTVILSQV) traverse the membrane as a helical segment. Residues 271–280 (SFWLNRESVP) are Cytoplasmic-facing. A helical transmembrane segment spans residues 281–300 (ARTVFGVTTVLTMTTLSISA). The Extracellular portion of the chain corresponds to 301–311 (RNSLPKVAYAT). The chain crosses the membrane as a helical span at residues 312–332 (AMDWFIAVCYAFVFSALIEFA). Over 333–420 (TVNYFTKRGW…FNSVSKIDRM (88 aa)) the chain is Cytoplasmic. A helical transmembrane segment spans residues 421–441 (SRIVFPVLFGTFNLVYWATYL). Residues 442 to 451 (NREPVLGVSP) are Extracellular-facing.

It belongs to the ligand-gated ion channel (TC 1.A.9) family. Gamma-aminobutyric acid receptor (TC 1.A.9.5) subfamily. GABRA2 sub-subfamily. In terms of assembly, heteropentamer, formed by a combination of alpha (GABRA1-6), beta (GABRB1-3), gamma (GABRG1-3), delta (GABRD), epsilon (GABRE), rho (GABRR1-3), pi (GABRP) and theta (GABRQ) subunits, each subunit exhibiting distinct physiological and pharmacological properties. Interacts with UBQLN1. Interacts with KIF21B. Interacts with LHFPL4. Interacts with SHISA7; interaction leads to the regulation of GABA(A) receptor trafficking, channel deactivation kinetics and pharmacology. In terms of processing, glycosylated.

Its subcellular location is the postsynaptic cell membrane. The protein resides in the cell membrane. It is found in the cytoplasmic vesicle membrane. The protein localises to the cell projection. It localises to the dendrite. It carries out the reaction chloride(in) = chloride(out). With respect to regulation, activated by pentobarbital. Inhibited by the antagonist bicuculline. Its function is as follows. Alpha subunit of the heteropentameric ligand-gated chloride channel gated by gamma-aminobutyric acid (GABA), a major inhibitory neurotransmitter in the brain. GABA-gated chloride channels, also named GABA(A) receptors (GABAAR), consist of five subunits arranged around a central pore and contain GABA active binding site(s) located at the alpha and beta subunit interface(s). When activated by GABA, GABAARs selectively allow the flow of chloride anions across the cell membrane down their electrochemical gradient. Chloride influx into the postsynaptic neuron following GABAAR opening decreases the neuron ability to generate a new action potential, thereby reducing nerve transmission. The alpha-2 subunit exhibits synaptogenic activity together with beta-2 and very little to no activity together with beta-3, the gamma-2 subunit being necessary but not sufficient to induce rapid synaptic contacts formation. This chain is Gamma-aminobutyric acid receptor subunit alpha-2 (GABRA2), found in Pongo abelii (Sumatran orangutan).